Here is a 513-residue protein sequence, read N- to C-terminus: Alpha-1B-glycoprotein (513 aa).

A signal peptide spans 1–20 (MSLLTTVLLLWGFTLGPGNA). Ig-like V-type domains lie at 22–126 (WLDS…VTGK), 127–219 (EPLP…MSAT), 220–312 (QLPP…PVEL), 313–415 (MWSD…LRIN), and 416–513 (GPAP…VEGS). 3 N-linked (GlcNAc...) asparagine glycosylation sites follow: N44, N89, and N192. 5 cysteine pairs are disulfide-bonded: C49–C96, C153–C195, C245–C292, C343–C392, and C441–C488. N-linked (GlcNAc...) asparagine glycosylation is found at N369, N381, N389, and N485.

Interacts with CRISP3. In terms of tissue distribution, isoform 1 is expressed in normal liver. Isoform 2 is expressed in the regenerating liver after partial hepatectomy and at very low levels in the normal lung, brain and testis.

The protein resides in the secreted. This is Alpha-1B-glycoprotein from Rattus norvegicus (Rat).